Reading from the N-terminus, the 260-residue chain is Thrombin-like enzyme 2 (260 aa).

A signal peptide spans 1–18; sequence MMLIRVLANLLILQLSYA. Positions 19 to 24 are excised as a propeptide; the sequence is QKSSEL. Residues 25–251 form the Peptidase S1 domain; that stretch reads VIGGDECNIN…HLDWIQSIIA (227 aa). Disulfide bonds link Cys31-Cys165, Cys52-Cys68, Cys102-Cys258, Cys144-Cys212, Cys176-Cys191, and Cys202-Cys227. His67 serves as the catalytic Charge relay system. Asn105 is a glycosylation site (N-linked (GlcNAc...) asparagine). The Charge relay system role is filled by Asp112. Asn156 and Asn172 each carry an N-linked (GlcNAc...) asparagine glycan. Residue Ser206 is the Charge relay system of the active site. The N-linked (GlcNAc...) asparagine glycan is linked to Asn253.

The protein belongs to the peptidase S1 family. Snake venom subfamily. Monomer. As to expression, expressed by the venom gland.

Its subcellular location is the secreted. In terms of biological role, thrombin-like snake venom serine protease. In Trimeresurus albolabris (White-lipped pit viper), this protein is Thrombin-like enzyme 2.